Reading from the N-terminus, the 177-residue chain is Putative adenylate kinase (177 aa).

Residues glycine 10, glycine 12, lysine 13, threonine 14, and threonine 15 each contribute to the ATP site. The NMP stretch occupies residues 30 to 50 (SLRDYAIEKGIGEMKGDELEV). Residues 99–109 (ERGYSREKVGE) form an LID region. 2 residues coordinate ATP: arginine 100 and lysine 138.

The protein belongs to the adenylate kinase family. AK6 subfamily. Interacts with uS11. Not a structural component of 40S pre-ribosomes, but transiently interacts with them by binding to uS11.

The enzyme catalyses AMP + ATP = 2 ADP. It catalyses the reaction ATP + H2O = ADP + phosphate + H(+). Functionally, broad-specificity nucleoside monophosphate (NMP) kinase that catalyzes the reversible transfer of the terminal phosphate group between nucleoside triphosphates and monophosphates. Also has ATPase activity. Involved in the late maturation steps of the 30S ribosomal particles, specifically 16S rRNA maturation. While NMP activity is not required for ribosome maturation, ATPase activity is. Associates transiently with small ribosomal subunit protein uS11. ATP hydrolysis breaks the interaction with uS11. May temporarily remove uS11 from the ribosome to enable a conformational change of the ribosomal RNA that is needed for the final maturation step of the small ribosomal subunit. This is Putative adenylate kinase from Thermococcus gammatolerans (strain DSM 15229 / JCM 11827 / EJ3).